Here is an 80-residue protein sequence, read N- to C-terminus: Exodeoxyribonuclease 7 small subunit (80 aa).

This sequence belongs to the XseB family. As to quaternary structure, heterooligomer composed of large and small subunits.

The protein localises to the cytoplasm. The catalysed reaction is Exonucleolytic cleavage in either 5'- to 3'- or 3'- to 5'-direction to yield nucleoside 5'-phosphates.. Bidirectionally degrades single-stranded DNA into large acid-insoluble oligonucleotides, which are then degraded further into small acid-soluble oligonucleotides. The chain is Exodeoxyribonuclease 7 small subunit from Phenylobacterium zucineum (strain HLK1).